The primary structure comprises 351 residues: Phosphate acyltransferase (351 aa).

It belongs to the PlsX family. As to quaternary structure, homodimer. Probably interacts with PlsY.

It localises to the cytoplasm. The catalysed reaction is a fatty acyl-[ACP] + phosphate = an acyl phosphate + holo-[ACP]. The protein operates within lipid metabolism; phospholipid metabolism. Functionally, catalyzes the reversible formation of acyl-phosphate (acyl-PO(4)) from acyl-[acyl-carrier-protein] (acyl-ACP). This enzyme utilizes acyl-ACP as fatty acyl donor, but not acyl-CoA. The polypeptide is Phosphate acyltransferase (Gloeothece citriformis (strain PCC 7424) (Cyanothece sp. (strain PCC 7424))).